The chain runs to 77 residues: Tachyplesin-1 (77 aa).

A signal peptide spans 1–23 (MKKLVIALCLMMVLAVMVEEAEA). Disulfide bonds link cysteine 26–cysteine 39 and cysteine 30–cysteine 35. Arginine amide is present on arginine 40. A propeptide spanning residues 41–77 (GKRNEVRQYRDRGYDVRAIPEETFFTRQDEDEDDDEE) is cleaved from the precursor.

This sequence belongs to the tachyplesin/polyphemusin family. As to expression, hemocytes.

It is found in the secreted. Significantly inhibits the growth of Gram-negative and Gram-positive bacteria. The protein is Tachyplesin-1 of Tachypleus tridentatus (Japanese horseshoe crab).